Reading from the N-terminus, the 268-residue chain is MAVGKNKGLSKGGKKGGKKKVVDPFSRKDWYDVKAPNMFQTRQIGKTLVNRTQGQRIASDYLKGRVFEVSLADLQKDIDPERSFRKFRLIAEDVQDRNVLCNFHGMDLTTDKYRSMVKKWQTLIEAIVEAKTVDGYLLRVFCIGFTFKDQQSQRKTCYAQQSQVRKIRARMTDIITNEVSGADLKQLVNKLALDSIAKDIEKSCQRIYPLHDVYIRKVKVLKKPRFDISKLLELHGDGGGKTTEAVVSAEGAVIDRPEGYEPPVQEAV.

Residues Met1–Val21 are disordered.

It belongs to the eukaryotic ribosomal protein eS1 family. Component of the small ribosomal subunit. Mature ribosomes consist of a small (40S) and a large (60S) subunit. The 40S subunit contains about 33 different proteins and 1 molecule of RNA (18S). The 60S subunit contains about 49 different proteins and 3 molecules of RNA (28S, 5.8S and 5S).

It is found in the cytoplasm. In terms of biological role, essential for oogenesis; required for late follicle cell development. This Drosophila mojavensis (Fruit fly) protein is Small ribosomal subunit protein eS1.